The sequence spans 166 residues: Ribosomal RNA large subunit methyltransferase H (166 aa).

Residues Leu85, Gly116, and 135–140 each bind S-adenosyl-L-methionine; that span reads ISKMTF.

It belongs to the RNA methyltransferase RlmH family. In terms of assembly, homodimer.

Its subcellular location is the cytoplasm. The enzyme catalyses pseudouridine(1915) in 23S rRNA + S-adenosyl-L-methionine = N(3)-methylpseudouridine(1915) in 23S rRNA + S-adenosyl-L-homocysteine + H(+). Its function is as follows. Specifically methylates the pseudouridine at position 1915 (m3Psi1915) in 23S rRNA. In Francisella tularensis subsp. holarctica (strain FTNF002-00 / FTA), this protein is Ribosomal RNA large subunit methyltransferase H.